The chain runs to 205 residues: CASP-like protein 0U1 (205 aa).

The Cytoplasmic portion of the chain corresponds to 1-38 (MDDAPGASDEAREPLLKRVGASVEGTSLMNHRLMKNPK). Residues 39 to 57 (FRALLVESLMALTTFSFMA) form a helical membrane-spanning segment. Topologically, residues 58–89 (KQTEGLAGPELSTLNDCGEAGCGFTKFYQFKG) are extracellular. The helical transmembrane segment at 90–110 (VVGVYAGFWAYTVILIAMYVI) threads the bilayer. Residues 111-124 (RKAPPPGTEFASYA) lie on the Cytoplasmic side of the membrane. Residues 125-145 (LFTAAMATFVVMSITECASVV) traverse the membrane as a helical segment. Residues 146–159 (LSSDYYVCKNADYS) lie on the Extracellular side of the membrane. Residues 160–180 (LVSLIFAAATIVLNCLTCAFA) traverse the membrane as a helical segment. Over 181–205 (WRQWGELKFVGLPKTLSALTETYPG) the chain is Cytoplasmic.

Belongs to the Casparian strip membrane proteins (CASP) family. Homodimer and heterodimers.

The protein localises to the cell membrane. The protein is CASP-like protein 0U1 of Ostreococcus lucimarinus (strain CCE9901).